A 335-amino-acid polypeptide reads, in one-letter code: 34 kDa spicule matrix protein (335 aa).

Residues Met1 to Gly17 form the signal peptide. In terms of domain architecture, C-type lectin spans Ser29 to Glu194. Cys50 and Cys193 form a disulfide bridge. The disordered stretch occupies residues Gln199–Ser335. Residues Pro207–Gly310 show a composition bias toward gly residues. Over residues Gln311–Arg323 the composition is skewed to low complexity.

This sequence belongs to the SM50 family. In terms of tissue distribution, embryo spicule.

The protein resides in the secreted. Major matrix protein of the sea urchin embryo spicule which directs crystal growth in certain orientations and inhibit growth in others. This Lytechinus pictus (Painted sea urchin) protein is 34 kDa spicule matrix protein.